The sequence spans 269 residues: GATA zinc finger domain-containing protein 1 (269 aa).

The GATA-type zinc-finger motif lies at 9–33 (CSVCKTTSSSMWKKGAQGEILCHHC). The segment at 63 to 115 (ATFASTSATPPQSNGGGGGKQSKQEIHRRSARLRNTKYKSAPAAEKKVSTKGK) is disordered. Lys262 participates in a covalent cross-link: Glycyl lysine isopeptide (Lys-Gly) (interchain with G-Cter in SUMO2).

In terms of assembly, component of a chromatin complex, at least composed of KDM5A, GATAD1 and EMSY. In terms of tissue distribution, ubiquitously expressed among various tissue types. Expressed in left ventricular myocytes.

The protein resides in the nucleus. Component of some chromatin complex recruited to chromatin sites methylated 'Lys-4' of histone H3 (H3K4me), with a preference for trimethylated form (H3K4me3). The sequence is that of GATA zinc finger domain-containing protein 1 (GATAD1) from Homo sapiens (Human).